Consider the following 410-residue polypeptide: Killer cell immunoglobulin-like receptor 3DL3 (410 aa).

Positions 1 to 25 (MSLMVVSMACVGFFLLEGPWPHVGG) are cleaved as a signal peptide. Over 26–322 (QDKPFLSAWP…VSVTGNSRHL (297 aa)) the chain is Extracellular. 3 Ig-like C2-type domains span residues 42 to 97 (GQHV…RCCS), 137 to 197 (GETV…RCFG), and 237 to 295 (GENV…RCFG). 2 disulfide bridges follow: Cys49–Cys95 and Cys144–Cys195. N-linked (GlcNAc...) asparagine glycosylation is found at Asn179, Asn239, and Asn273. Residues Cys244 and Cys293 are joined by a disulfide bond. Residues 323–343 (HVLIGTSVVIIPFAILLFFLL) traverse the membrane as a helical segment. At 344 to 410 (HRWCANKKNA…PKTPPTDTSV (67 aa)) the chain is on the cytoplasmic side.

The protein belongs to the immunoglobulin superfamily.

It is found in the cell membrane. Receptor on natural killer cells. May inhibit the activity of NK cells thus preventing cell lysis. This Homo sapiens (Human) protein is Killer cell immunoglobulin-like receptor 3DL3 (KIR3DL3).